We begin with the raw amino-acid sequence, 856 residues long: Inactive rhomboid protein 1 (856 aa).

The segment at 1-20 (MSEARRDSTSSLQRKKPPWL) is disordered. At 1–412 (MSEARRDSTS…HRPFFTYWLT (412 aa)) the chain is on the cytoplasmic side. Residues Ser-76 and Ser-176 each carry the phosphoserine modification. Phosphothreonine is present on residues Thr-180 and Thr-183. At Ser-391 the chain carries Phosphoserine. Residues 413–433 (FVHSLVTILAVCIYGIAPVGF) traverse the membrane as a helical segment. Residues 434–656 (SQHETVDSVL…NPEVPDQFYR (223 aa)) are Lumenal-facing. An N-linked (GlcNAc...) asparagine glycan is attached at Asn-584. Residues 657–677 (LWLSLFLHAGILHCLVSVCFQ) form a helical membrane-spanning segment. The Cytoplasmic portion of the chain corresponds to 678 to 692 (MTVLRDLEKLAGWHR). Residues 693 to 713 (IAIIYLLSGVTGNLASAIFLP) traverse the membrane as a helical segment. At 714–715 (YR) the chain is on the lumenal side. Residues 716–736 (AEVGPAGSQFGILACLFVELF) form a helical membrane-spanning segment. At 737 to 747 (QSWQILARPWR) the chain is on the cytoplasmic side. The helical transmembrane segment at 748–768 (AFFKLLAVVLFLFAFGLLPWI) threads the bilayer. Residues 769-773 (DNFAH) lie on the Lumenal side of the membrane. A helical membrane pass occupies residues 774–794 (ISGFVSGLFLSFAFLPYISFG). Topologically, residues 795–804 (KFDLYRKRCQ) are cytoplasmic. A helical transmembrane segment spans residues 805-825 (IIIFQAVFLGLLAGLVVLFYF). At 826 to 856 (YPVRCEWCEFLTCIPFTDKFCEKYELDAQLH) the chain is on the lumenal side.

The protein belongs to the peptidase S54 family. As to quaternary structure, homodimer, or homooligomer. Interacts with TGFA and HBEGF. Interacts with EGF; may retain EGF in the endoplasmic reticulum and regulates its degradation through the endoplasmic reticulum-associated degradation (ERAD). Interacts (via cytoplasmic N-terminus) with FRMD8/iTAP; this interaction leads to mutual protein stabilization. Interacts with ADAM17/TACE.

The protein localises to the endoplasmic reticulum membrane. The protein resides in the golgi apparatus membrane. In terms of biological role, regulates ADAM17 protease, a sheddase of the epidermal growth factor (EGF) receptor ligands and TNF, thereby plays a role in sleep, cell survival, proliferation, migration and inflammation. Does not exhibit any protease activity on its own. The chain is Inactive rhomboid protein 1 (Rhbdf1) from Rattus norvegicus (Rat).